We begin with the raw amino-acid sequence, 143 residues long: SsrA-binding protein (143 aa).

It belongs to the SmpB family.

It is found in the cytoplasm. Required for rescue of stalled ribosomes mediated by trans-translation. Binds to transfer-messenger RNA (tmRNA), required for stable association of tmRNA with ribosomes. tmRNA and SmpB together mimic tRNA shape, replacing the anticodon stem-loop with SmpB. tmRNA is encoded by the ssrA gene; the 2 termini fold to resemble tRNA(Ala) and it encodes a 'tag peptide', a short internal open reading frame. During trans-translation Ala-aminoacylated tmRNA acts like a tRNA, entering the A-site of stalled ribosomes, displacing the stalled mRNA. The ribosome then switches to translate the ORF on the tmRNA; the nascent peptide is terminated with the 'tag peptide' encoded by the tmRNA and targeted for degradation. The ribosome is freed to recommence translation, which seems to be the essential function of trans-translation. The polypeptide is SsrA-binding protein (Deinococcus radiodurans (strain ATCC 13939 / DSM 20539 / JCM 16871 / CCUG 27074 / LMG 4051 / NBRC 15346 / NCIMB 9279 / VKM B-1422 / R1)).